Consider the following 617-residue polypeptide: Isopropyl malate synthase gloH (617 aa).

Positions 47 to 325 constitute a Pyruvate carboxyltransferase domain; sequence PIWLSTDLRD…ETGLDFSDLL (279 aa).

Belongs to the alpha-IPM synthase/homocitrate synthase family. LeuA type 2 subfamily.

It carries out the reaction 3-methyl-2-oxobutanoate + acetyl-CoA + H2O = (2S)-2-isopropylmalate + CoA + H(+). Its pathway is mycotoxin biosynthesis. Its function is as follows. 2-isopropylmalate synthase; part of the gene cluster that mediates the biosynthesis of pneumocandins, lipohexapeptides of the echinocandin family that prevent fungal cell wall formation by non-competitive inhibition of beta-1,3-glucan synthase. The 10,12-dimethylmyristoyl side chain is synthesized by the reducing polyketide synthase gloL/GLPKS4. The thioesterase gloN/GLHYD exclusively interacts with gloL/GLPKS4 to maintain turnover of the polyketide side chain. The 10R,12S-dimethylmyristic acid is then transferred to the first thiolation domain of the nonribosomal peptide synthetase gloA/GLNRPS4 by the acyl-AMP ligase gloD/GLligase, followed by its acylation to L-ornithine to trigger elongation of the cyclic hexapeptide. L-ornithine, 4R-hydroxyl-L-proline (generated from L-proline by the dioxygenase gloF/GLOXY2), 3S-hydroxyl-L-homotyrosine (generated by gloG/GLHtyB, gloH/GLHtyA, gloI/GLHtyC, gloJ/GLHtyD and hydroxylated at C-3 by the dioxygenase gloM/GLOXY1), 3R-hydroxyl-L-glutamine (generated from L-glutamine probably by the dioxygenase gloE/GLOXY3) and 3S-hydroxyl-L-proline (generated from L-proline by the dioxygenase gloF/GLOXY2 to yield pneumocandin B0), or 3S-hydroxyl-4S-methyl-L-proline (generated from L-leucine by the dioxygenase gloC/GLOXY4 to yield pneumocandin A0) are sequentially added to the growing chain. The last C domain of gloA/GLNRPS4 is proposed to be responsible for cyclization by condensation to form the peptide bond between L-ornithine and 3S-hydroxyl-4S-methyl-L-proline (for pneumocandin A0) or 3S-hydroxyl-L-proline (for pneumocandin B0). Finally, the subsequent C-4 hydroxylation of 3S-hydroxyl-L-homotyrosine and L-ornithine dihydroxylation at C-4 and C-5 are performed by the cytochrome P450 monooxygenases gloP/GLP450-1 and gloO/GLP450-2, respectively. This is Isopropyl malate synthase gloH from Glarea lozoyensis (strain ATCC 20868 / MF5171).